A 185-amino-acid polypeptide reads, in one-letter code: 16S rRNA aminocarboxypropyltransferase (185 aa).

S-adenosyl-L-methionine contacts are provided by Thr19, Ile69, Leu93, Tyr108, and Thr112.

This sequence belongs to the TDD superfamily. TSR3 family.

The protein localises to the cytoplasm. It catalyses the reaction an N(1)-methylpseudouridine in rRNA + S-adenosyl-L-methionine = N(1)-methyl-N(3)-[(3S)-3-amino-3-carboxypropyl]pseudouridine in rRNA + S-methyl-5'-thioadenosine + H(+). Aminocarboxypropyltransferase that catalyzes the aminocarboxypropyl transfer on pseudouridine corresponding to position 914 in M.jannaschii 16S rRNA. It constitutes the last step in biosynthesis of the hypermodified N1-methyl-N3-(3-amino-3-carboxypropyl) pseudouridine (m1acp3-Psi). The protein is 16S rRNA aminocarboxypropyltransferase of Vulcanisaeta distributa (strain DSM 14429 / JCM 11212 / NBRC 100878 / IC-017).